A 131-amino-acid chain; its full sequence is Small ribosomal subunit protein uS8 (131 aa).

The protein belongs to the universal ribosomal protein uS8 family. In terms of assembly, part of the 30S ribosomal subunit. Contacts proteins S5 and S12.

Functionally, one of the primary rRNA binding proteins, it binds directly to 16S rRNA central domain where it helps coordinate assembly of the platform of the 30S subunit. This Campylobacter jejuni (strain RM1221) protein is Small ribosomal subunit protein uS8.